The sequence spans 130 residues: MDPIADYLTKIRNAIKAKHRVVEVPASNIKKEITKVLFDKGYIQSYKFEESAVQGSIKIALKYHPLTKESAIVKIERISKPGLRKYTHAETMPRVLNGLGVAIVSTSKGIMSDKEAKNLNIGGEVLCFVY.

Belongs to the universal ribosomal protein uS8 family. As to quaternary structure, part of the 30S ribosomal subunit. Contacts proteins S5 and S12.

In terms of biological role, one of the primary rRNA binding proteins, it binds directly to 16S rRNA central domain where it helps coordinate assembly of the platform of the 30S subunit. The protein is Small ribosomal subunit protein uS8 of Cytophaga hutchinsonii (strain ATCC 33406 / DSM 1761 / CIP 103989 / NBRC 15051 / NCIMB 9469 / D465).